A 124-amino-acid polypeptide reads, in one-letter code: uncharacterized protein (124 aa).

The segment at 73 to 94 adopts a dksA C4-type; degenerate zinc-finger fold; it reads CEETGAPIPLAKLAVLPTARTA.

This is an uncharacterized protein from Bacillus subtilis (strain 168).